The sequence spans 427 residues: Trigger factor (427 aa).

The 86-residue stretch at Gly-163 to Pro-248 folds into the PPIase FKBP-type domain.

It belongs to the FKBP-type PPIase family. Tig subfamily.

The protein resides in the cytoplasm. It carries out the reaction [protein]-peptidylproline (omega=180) = [protein]-peptidylproline (omega=0). In terms of biological role, involved in protein export. Acts as a chaperone by maintaining the newly synthesized protein in an open conformation. Functions as a peptidyl-prolyl cis-trans isomerase. The chain is Trigger factor from Streptococcus mutans serotype c (strain ATCC 700610 / UA159).